Here is a 132-residue protein sequence, read N- to C-terminus: Small ribosomal subunit protein uS8c (132 aa).

The protein belongs to the universal ribosomal protein uS8 family. Part of the 30S ribosomal subunit.

It localises to the plastid. The protein resides in the chloroplast. One of the primary rRNA binding proteins, it binds directly to 16S rRNA central domain where it helps coordinate assembly of the platform of the 30S subunit. This is Small ribosomal subunit protein uS8c (rps8) from Guillardia theta (Cryptophyte).